A 376-amino-acid polypeptide reads, in one-letter code: DNA repair protein RAD51 homolog 3 (376 aa).

The required for Holliday junction resolution activity stretch occupies residues 1–126 (MRGKTFRFEM…LMKTTEICGA (126 aa)). Phosphoserine is present on S20. An interaction with RAD51B, RAD51D and XRCC3 region spans residues 79–136 (SESHKKCTALELLEQEHTQGFIITFCSALDDILGGGVPLMKTTEICGAPGVGKTQLCM). 125–132 (GAPGVGKT) contacts ATP. Residues 366–370 (RKRSR) carry the Nuclear localization signal motif.

Belongs to the RecA family. RAD51 subfamily. Part of the RAD51 paralog protein complexes BCDX2 and CX3; the complexes have a ring-like structure arranged into a flat disc around a central channel. The BCDX2 complex consits of RAD51B, RAD51C, RAD51D and XRCC2; the CX3 complex consists of RAD51C and XRCC3. The BCDX2 subcomplex RAD51B:RAD51C interacts with RAD51. Interacts with SWSAP1; involved in homologous recombination repair. Interacts directly with PALB2 which may serve as a scaffold for a HR complex containing PALB2, BRCA2, RAD51C, RAD51 and XRCC3. Interacts with HELQ. Interacts with DNA damage up-regulated protein DDUP. As to expression, expressed in a variety of tissues, with highest expression in testis, heart muscle, spleen and prostate.

Its subcellular location is the nucleus. It is found in the cytoplasm. The protein resides in the perinuclear region. The protein localises to the mitochondrion. Its function is as follows. Essential for the homologous recombination (HR) pathway of DNA repair. Involved in the homologous recombination repair (HRR) pathway of double-stranded DNA breaks arising during DNA replication or induced by DNA-damaging agents. Part of the RAD51 paralog protein complexes BCDX2 and CX3 which act at different stages of the BRCA1-BRCA2-dependent HR pathway. Upon DNA damage, BCDX2 seems to act downstream of BRCA2 recruitment and upstream of RAD51 recruitment; CX3 seems to act downstream of RAD51 recruitment; both complexes bind predominantly to the intersection of the four duplex arms of the Holliday junction (HJ) and to junction of replication forks. The BCDX2 complex was originally reported to bind single-stranded DNA, single-stranded gaps in duplex DNA and specifically to nicks in duplex DNA. The BCDX2 subcomplex RAD51B:RAD51C exhibits single-stranded DNA-dependent ATPase activity suggesting an involvement in early stages of the HR pathway. Involved in RAD51 foci formation in response to DNA damage suggesting an involvement in early stages of HR probably in the invasion step. Has an early function in DNA repair in facilitating phosphorylation of the checkpoint kinase CHEK2 and thereby transduction of the damage signal, leading to cell cycle arrest and HR activation. Participates in branch migration and HJ resolution and thus is important for processing HR intermediates late in the DNA repair process; the function may be linked to the CX3 complex. Part of a PALB2-scaffolded HR complex containing BRCA2 and which is thought to play a role in DNA repair by HR. Protects RAD51 from ubiquitin-mediated degradation that is enhanced following DNA damage. Plays a role in regulating mitochondrial DNA copy number under conditions of oxidative stress in the presence of RAD51 and XRCC3. Contributes to DNA cross-link resistance, sister chromatid cohesion and genomic stability. Involved in maintaining centrosome number in mitosis. In Homo sapiens (Human), this protein is DNA repair protein RAD51 homolog 3 (RAD51C).